Here is a 269-residue protein sequence, read N- to C-terminus: MISKINFVKMHGLGNDCVIVNKRDLLNAHNLSQLAKNIADRHTGIGCDQFIIYENHNNFYEMIIYNIDGSSAKLCGNATRCLAKLIYLDTGKKDITIVVGNKELLCRIEDENKISVNVGAVSFNETWMPSRDKIWAFAARYMIDLKETICVDVGNPHLVIFSKLESQDQKIVGETLQAKELFANGVNVNFAEIKDNKINLSVWERGVGLTGACGSGACGSFAAGLKRGFIHSPSTVVFKHGSLNMKEENGNIIMQGSATLIAEGVYCCE.

Substrate-binding residues include asparagine 15, glutamine 49, and asparagine 66. The Proton donor role is filled by cysteine 75. Substrate-binding positions include glycine 76–asparagine 77, asparagine 155, asparagine 187, and glutamate 204–arginine 205. The active-site Proton acceptor is cysteine 213. Glycine 214–serine 215 is a binding site for substrate.

It belongs to the diaminopimelate epimerase family. As to quaternary structure, homodimer.

It localises to the cytoplasm. It catalyses the reaction (2S,6S)-2,6-diaminopimelate = meso-2,6-diaminopimelate. Its pathway is amino-acid biosynthesis; L-lysine biosynthesis via DAP pathway; DL-2,6-diaminopimelate from LL-2,6-diaminopimelate: step 1/1. Its function is as follows. Catalyzes the stereoinversion of LL-2,6-diaminopimelate (L,L-DAP) to meso-diaminopimelate (meso-DAP), a precursor of L-lysine and an essential component of the bacterial peptidoglycan. In Rickettsia canadensis (strain McKiel), this protein is Diaminopimelate epimerase.